A 185-amino-acid polypeptide reads, in one-letter code: MIDEALFDAEEKMEKAVSVAREDLSMIRTGRANPGMFSRLVIDYYGSATPITQLASINVPEARLVVIKPYDAIQLHAIETAIRNSDLGVNPSNDGTLIRVAVPQLTEERRRELVKQAKCKGEDAKVSVRNIRRKVMEELHRIRKDGEAGEDEVSRAEKDLDKTTHQYVIQIDELVKHKEGELLEV.

The protein belongs to the RRF family.

It is found in the cytoplasm. Its function is as follows. Responsible for the release of ribosomes from messenger RNA at the termination of protein biosynthesis. May increase the efficiency of translation by recycling ribosomes from one round of translation to another. The polypeptide is Ribosome-recycling factor (Mycobacterium leprae (strain Br4923)).